The following is a 150-amino-acid chain: UPF0756 membrane protein NTHI1233 (150 aa).

4 consecutive transmembrane segments (helical) span residues 1–21 (MTLQ…LGVL), 52–72 (YGVK…LVSG), 81–101 (GFLS…AWLA), and 123–143 (IIGV…AGIL).

It belongs to the UPF0756 family.

It is found in the cell membrane. This is UPF0756 membrane protein NTHI1233 from Haemophilus influenzae (strain 86-028NP).